Consider the following 787-residue polypeptide: Dolichyl-diphosphooligosaccharide--protein glycosyltransferase subunit STT3A (787 aa).

Over 1–18 (MAEPESSTAAAGGSRLRN) the chain is Cytoplasmic. The helical transmembrane segment at 19 to 39 (ACGGVLCAFTLLLIGVLAFSI) threads the bilayer. The Lumenal portion of the chain corresponds to 40–125 (RLFSVIKYES…LSVETVCVFT (86 aa)). The DXD motif 1 signature appears at 53-55 (EFD). Asp-55 lines the Mn(2+) pocket. The helical transmembrane segment at 126-144 (APIFSANASWATYLLTKEA) threads the bilayer. Over 145-146 (KG) the chain is Cytoplasmic. Residues 147-164 (TGAGLMAAAILAMVPSYI) traverse the membrane as a helical segment. The Lumenal segment spans residues 165–175 (SRSVAGSYDNE). Positions 173 and 175 each coordinate Mn(2+). The short motif at 173–175 (DNE) is the DXD motif 2 element. Residues 176 to 195 (AVAIFALIFTFYLYVKTLNT) traverse the membrane as a helical segment. Over 196–197 (GS) the chain is Cytoplasmic. Residues 198–212 (LFYATLNALSYFYMV) form a helical membrane-spanning segment. Topologically, residues 213 to 217 (CSWGG) are lumenal. The chain crosses the membrane as a helical span at residues 218–234 (YTFIINLIPIHVLLCIV). Topologically, residues 235-239 (TGRYS) are cytoplasmic. A helical membrane pass occupies residues 240 to 265 (SRLYIAYAPLVILGTLLAALVPVVGF). The Lumenal segment spans residues 266–273 (NAVMTSEH). A helical membrane pass occupies residues 274–293 (FASFLVFIILHVVALVYYIK). At 294–306 (GLLTPRLFKVAMT) the chain is on the cytoplasmic side. A helical transmembrane segment spans residues 307–327 (LVITVGLAVCFAVIAILIALV). Residues 328 to 365 (ASSPTKGWSGRSLSLLDPTYASKYIPIIASVSEHQPPT) are Lumenal-facing. An SVSE motif motif is present at residues 357–360 (SVSE). Residues 366 to 388 (WPSYFMDINVLAFLIPAGIISCF) traverse the membrane as a helical segment. At 389–394 (LPLSDA) the chain is on the cytoplasmic side. The chain crosses the membrane as a helical span at residues 395–411 (SSFVVLYLVTAVYFSGV). The Lumenal portion of the chain corresponds to 412 to 415 (MVRL). Arg-414 contacts dolichyl diphosphooligosaccharide. The chain crosses the membrane as a helical span at residues 416 to 437 (MLVLAPAACILSGIALSEAFDV). Residues 438–525 (LTRSVKYQLS…KLLVLPMEAS (88 aa)) lie on the Cytoplasmic side of the membrane. Residues 453–475 (SPAASGDSSAESSSASTVSTNSA) show a composition bias toward low complexity. A disordered region spans residues 453–507 (SPAASGDSSAESSSASTVSTNSAKNETRPEKTETAPKEKPSKKNRKKEKEVAESV). The segment covering 477–504 (NETRPEKTETAPKEKPSKKNRKKEKEVA) has biased composition (basic and acidic residues). The chain crosses the membrane as a helical span at residues 526-546 (VLGILLLIVLGGFYVVHCVWA). At 547–787 (AAEAYSAPSI…AAGRKKNPWQ (241 aa)) the chain is on the lumenal side. An interacts with target acceptor peptide in protein substrate region spans residues 592 to 594 (WWD). The WWDYG motif signature appears at 592–596 (WWDYG). Tyr-597 is a binding site for dolichyl diphosphooligosaccharide. Asn-604 and Asn-611 each carry an N-linked (GlcNAc...) asparagine glycan. Asn-615 carries an N-linked (GlcNAc...) (high mannose) asparagine glycan. The DK motif signature appears at 659 to 666 (DINKFLWM). The segment covering 759–769 (RVRGKLKKLKS) has biased composition (basic residues). The disordered stretch occupies residues 759-787 (RVRGKLKKLKSGSKASSTNAAGRKKNPWQ).

The protein belongs to the STT3 family. As to quaternary structure, component of the oligosaccharyltransferase (OST) complex. The cofactor is Mg(2+). It depends on Mn(2+) as a cofactor.

The protein resides in the endoplasmic reticulum membrane. It catalyses the reaction a di-trans,poly-cis-dolichyl diphosphooligosaccharide + L-asparaginyl-[protein] = N(4)-(oligosaccharide-(1-&gt;4)-N-acetyl-beta-D-glucosaminyl-(1-&gt;4)-N-acetyl-beta-D-glucosaminyl)-L-asparaginyl-[protein] + a di-trans,poly-cis-dolichyl diphosphate + H(+). Its pathway is protein modification; protein glycosylation. Functionally, catalytic subunit of the oligosaccharyl transferase (OST) complex that catalyzes the initial transfer of a defined glycan (Glc(3)Man(9)GlcNAc(2) in eukaryotes) from the lipid carrier dolichol-pyrophosphate to an asparagine residue within an Asn-X-Ser/Thr consensus motif in nascent polypeptide chains, the first step in protein N-glycosylation. N-glycosylation occurs cotranslationally and the complex associates with the Sec61 complex at the channel-forming translocon complex that mediates protein translocation across the endoplasmic reticulum (ER). All subunits are required for a maximal enzyme activity. This subunit contains the active site and the acceptor peptide and donor lipid-linked oligosaccharide (LLO) binding pockets. This chain is Dolichyl-diphosphooligosaccharide--protein glycosyltransferase subunit STT3A (STT3A), found in Oryza sativa subsp. japonica (Rice).